Consider the following 161-residue polypeptide: 2-C-methyl-D-erythritol 2,4-cyclodiphosphate synthase (161 aa).

Residues D9 and H11 each coordinate a divalent metal cation. 4-CDP-2-C-methyl-D-erythritol 2-phosphate-binding positions include 9-11 and 37-38; these read DFH and HS. Residue H45 participates in a divalent metal cation binding. 4-CDP-2-C-methyl-D-erythritol 2-phosphate is bound by residues 59-61, 64-68, 135-138, and R145; these read DIG, FPDTD, and TTTE.

This sequence belongs to the IspF family. In terms of assembly, homotrimer. A divalent metal cation is required as a cofactor.

It carries out the reaction 4-CDP-2-C-methyl-D-erythritol 2-phosphate = 2-C-methyl-D-erythritol 2,4-cyclic diphosphate + CMP. The protein operates within isoprenoid biosynthesis; isopentenyl diphosphate biosynthesis via DXP pathway; isopentenyl diphosphate from 1-deoxy-D-xylulose 5-phosphate: step 4/6. Involved in the biosynthesis of isopentenyl diphosphate (IPP) and dimethylallyl diphosphate (DMAPP), two major building blocks of isoprenoid compounds. Catalyzes the conversion of 4-diphosphocytidyl-2-C-methyl-D-erythritol 2-phosphate (CDP-ME2P) to 2-C-methyl-D-erythritol 2,4-cyclodiphosphate (ME-CPP) with a corresponding release of cytidine 5-monophosphate (CMP). This Leptospira interrogans serogroup Icterohaemorrhagiae serovar copenhageni (strain Fiocruz L1-130) protein is 2-C-methyl-D-erythritol 2,4-cyclodiphosphate synthase.